The primary structure comprises 366 residues: Inhibin alpha chain (366 aa).

Positions 1–20 (MVSQRSLLLLLLLTLRDVDS) are cleaved as a signal peptide. The propeptide occupies 21–63 (CQGPELVRELVLAKVKALFLDALGPPAMDGEGGDPGIRRLPRR). A propeptide spans 64–233 (HAVGGFMHRT…APSAGERARR (170 aa)) (inhibin alpha N-terminal region). N-linked (GlcNAc...) asparagine glycans are attached at residues Asn-147 and Asn-269. 3 disulfide bridges follow: Cys-263/Cys-328, Cys-292/Cys-363, and Cys-296/Cys-365.

This sequence belongs to the TGF-beta family. Dimeric, linked by one or more disulfide bonds. Activin B is a dimer of alpha and beta-B. Inhibin A is a dimer of alpha and beta-A. Inhibin B is a dimer of alpha and beta-B. Interacts with TGFBR3L; this interaction regulates female fertility. Proteolytic processing yields a number of bioactive forms, consisting either solely of the mature alpha chain, of the most N-terminal propeptide linked through a disulfide bond to the mature alpha chain, or of the entire proprotein.

The protein localises to the secreted. Functionally, inhibins and activins inhibit and activate, respectively, the secretion of follitropin by the pituitary gland. Inhibins/activins are involved in regulating a number of diverse functions such as hypothalamic and pituitary hormone secretion, gonadal hormone secretion, germ cell development and maturation, erythroid differentiation, insulin secretion, nerve cell survival, embryonic axial development or bone growth, depending on their subunit composition. Inhibins appear to oppose the functions of activins. Its function is as follows. Inhibin A is a dimer of alpha/INHA and beta-A/INHBA that functions as a feedback regulator in the hypothalamic-pituitary-gonadal (HPG) axis. Inhibits the secretion of FSH from the anterior pituitary gland by acting on pituitary gonadotrope cells. Antagonizes activin A by binding to the proteoglycan, betaglycan, and forming a stable complex with and, thereby, sequestering type II activin receptors while excluding type I receptor. In terms of biological role, inhibin B is a dimer of alpha and beta-B that plays a crucial role in the regulation of the reproductive system by inhibiting the secretion of follicle-stimulating hormone (FSH) from the anterior pituitary gland. Thereby, maintains reproductive homeostasis in both males and females. Acts as a more potent suppressor of FSH release than inhibin A. Functions as competitive receptor antagonist binding activin type II receptors with high affinity in the presence of the TGF-beta type III coreceptor/TGFBR3L. This chain is Inhibin alpha chain (Inha), found in Mus musculus (Mouse).